A 960-amino-acid polypeptide reads, in one-letter code: Glycine dehydrogenase (decarboxylating) (960 aa).

Lys-709 carries the post-translational modification N6-(pyridoxal phosphate)lysine.

This sequence belongs to the GcvP family. In terms of assembly, the glycine cleavage system is composed of four proteins: P, T, L and H. Pyridoxal 5'-phosphate serves as cofactor.

The enzyme catalyses N(6)-[(R)-lipoyl]-L-lysyl-[glycine-cleavage complex H protein] + glycine + H(+) = N(6)-[(R)-S(8)-aminomethyldihydrolipoyl]-L-lysyl-[glycine-cleavage complex H protein] + CO2. In terms of biological role, the glycine cleavage system catalyzes the degradation of glycine. The P protein binds the alpha-amino group of glycine through its pyridoxal phosphate cofactor; CO(2) is released and the remaining methylamine moiety is then transferred to the lipoamide cofactor of the H protein. This Hahella chejuensis (strain KCTC 2396) protein is Glycine dehydrogenase (decarboxylating).